The chain runs to 45 residues: Scolopendra 20417.15 Da toxin (45 aa).

The segment at 26-45 (KVANGQEAGQPGAXNMKELH) is disordered.

The protein belongs to the CRISP family. Venom allergen 5-like subfamily. Post-translationally, contains 3 disulfide bonds. In terms of tissue distribution, expressed by the venom gland.

Its subcellular location is the secreted. This chain is Scolopendra 20417.15 Da toxin, found in Scolopendra viridicornis nigra (Brazilian giant centipede).